We begin with the raw amino-acid sequence, 278 residues long: Putative phosphoenolpyruvate synthase regulatory protein (278 aa).

158-165 (GVSRSGKT) contributes to the ADP binding site.

It belongs to the pyruvate, phosphate/water dikinase regulatory protein family. PSRP subfamily.

It carries out the reaction [pyruvate, water dikinase] + ADP = [pyruvate, water dikinase]-phosphate + AMP + H(+). The enzyme catalyses [pyruvate, water dikinase]-phosphate + phosphate + H(+) = [pyruvate, water dikinase] + diphosphate. Its function is as follows. Bifunctional serine/threonine kinase and phosphorylase involved in the regulation of the phosphoenolpyruvate synthase (PEPS) by catalyzing its phosphorylation/dephosphorylation. The sequence is that of Putative phosphoenolpyruvate synthase regulatory protein from Acinetobacter baylyi (strain ATCC 33305 / BD413 / ADP1).